The primary structure comprises 566 residues: Zinc finger protein 704 (566 aa).

Disordered stretches follow at residues M1–A148, D166–E203, and P253–D324. A compositionally biased stretch (low complexity) spans L12–G31. The segment covering L32–G55 has biased composition (pro residues). Positions T56 to L72 are enriched in low complexity. Residues R91–A100 are compositionally biased toward basic and acidic residues. The segment covering E101 to E128 has biased composition (acidic residues). Residues E186–E203 are compositionally biased toward basic and acidic residues. The segment covering S267–S290 has biased composition (low complexity). The segment at F346–H371 adopts a C2H2-type zinc-finger fold. S378 and S381 each carry phosphoserine. 2 disordered regions span residues V409–T436 and P497–E535. A sufficient for binding to RE2 sequence motifs region spans residues G471–D566. Residues K537–K541 carry the CR1 motif. The CR2 motif lies at C555–K559.

The protein localises to the nucleus. Functionally, transcription factor which binds to RE2 sequence elements in the MYOD1 enhancer. The sequence is that of Zinc finger protein 704 from Mus musculus (Mouse).